A 231-amino-acid chain; its full sequence is ADP-ribose pyrophosphatase (231 aa).

Phe2 carries the N-acetylserine modification. Substrate contacts are provided by residues Trp46, 64–65, Arg69, and Arg103; that span reads WD. In terms of domain architecture, Nudix hydrolase spans 75 to 214; sequence GGVDGIGILT…DQQGYKLDAR (140 aa). Ala115 provides a ligand contact to Mg(2+). The short motif at 116–137 is the Nudix box element; sequence GLIDAGEDIDTAALRELKEETG. Residue Leu117 coordinates substrate. Mg(2+) is bound by residues Glu131 and Glu135. A substrate-binding site is contributed by Asp152. Glu185 is a binding site for Mg(2+).

Belongs to the Nudix hydrolase family. NudF subfamily. The cofactor is Mg(2+). Mn(2+) is required as a cofactor.

The enzyme catalyses ADP-D-ribose + H2O = D-ribose 5-phosphate + AMP + 2 H(+). This Saccharomyces cerevisiae (strain ATCC 204508 / S288c) (Baker's yeast) protein is ADP-ribose pyrophosphatase (YSA1).